Reading from the N-terminus, the 104-residue chain is L-rhamnose mutarotase (104 aa).

A substrate-binding site is contributed by Tyr18. His22 functions as the Proton donor in the catalytic mechanism. Residues Tyr41 and 76 to 77 each bind substrate; that span reads WW.

Belongs to the rhamnose mutarotase family. In terms of assembly, homodimer.

It localises to the cytoplasm. The enzyme catalyses alpha-L-rhamnose = beta-L-rhamnose. The protein operates within carbohydrate metabolism; L-rhamnose metabolism. Its function is as follows. Involved in the anomeric conversion of L-rhamnose. The chain is L-rhamnose mutarotase from Escherichia coli O7:K1 (strain IAI39 / ExPEC).